Reading from the N-terminus, the 482-residue chain is MAAAAAGAGSGPWAAQEKQFPPALLSFFIYNPRFGPREGQEENKILFYHPNEVEKNEKIRNVGLCEAIVQFTRTFSPSKPAKSLHTQKNRQFFNEPEENFWMVMVVRNPIIEKQSKDGKPVIEYQEEELLDKVYSSVLRQCYSMYKLFNGTFLKAMEDGGVKLLKERLEKFFHRYLQTLHLQSCDLLDIFGGISFFPLDKMTYLKIQSFINRMEESLNIVKYTAFLYNDQLIWSGLEQDDMRILYKYLTTSLFPRHIEPELAGRDSPIRAEMPGNLQHYGRFLTGPLNLNDPDAKCRFPKIFVNTDDTYEELHLIVYKAMSAAVCFMIDASVHPTLDFCRRLDSIVGPQLTVLASDICEQFNINKRMSGSEKEPQFKFIYFNHMNLAEKSTVHMRKTPSVSLTSVHPDLMKILGDINSDFTRVDEDEEIIVKAMSDYWVVGKKSDRRELYVILNQKNANLIEVNEEVKKLCATQFNNIFFLD.

At A2 the chain carries N-acetylalanine. A phosphoserine mark is found at S76 and S266.

This sequence belongs to the CCZ1 family. Interacts with MON1A. Found in a complex with RMC1, CCZ1, MON1A and MON1B.

Its subcellular location is the lysosome membrane. Acts in concert with MON1A, as a guanine exchange factor (GEF) for RAB7, promotes the exchange of GDP to GTP, converting it from an inactive GDP-bound form into an active GTP-bound form. The sequence is that of Vacuolar fusion protein CCZ1 homolog (CCZ1) from Homo sapiens (Human).